We begin with the raw amino-acid sequence, 324 residues long: Glyoxylate/hydroxypyruvate reductase B (324 aa).

Active-site residues include arginine 237 and glutamate 266. Catalysis depends on histidine 285, which acts as the Proton donor.

This sequence belongs to the D-isomer specific 2-hydroxyacid dehydrogenase family. GhrB subfamily. As to quaternary structure, homodimer.

It localises to the cytoplasm. It catalyses the reaction glycolate + NADP(+) = glyoxylate + NADPH + H(+). The catalysed reaction is (R)-glycerate + NAD(+) = 3-hydroxypyruvate + NADH + H(+). It carries out the reaction (R)-glycerate + NADP(+) = 3-hydroxypyruvate + NADPH + H(+). Catalyzes the NADPH-dependent reduction of glyoxylate and hydroxypyruvate into glycolate and glycerate, respectively. In Citrobacter koseri (strain ATCC BAA-895 / CDC 4225-83 / SGSC4696), this protein is Glyoxylate/hydroxypyruvate reductase B.